A 37-amino-acid polypeptide reads, in one-letter code: Cytochrome b6-f complex subunit 5 (37 aa).

A helical transmembrane segment spans residues 5–25; it reads LLSGIVLGMIPVTLAGLFVTA.

It belongs to the PetG family. As to quaternary structure, the 4 large subunits of the cytochrome b6-f complex are cytochrome b6, subunit IV (17 kDa polypeptide, PetD), cytochrome f and the Rieske protein, while the 4 small subunits are PetG, PetL, PetM and PetN. The complex functions as a dimer.

Its subcellular location is the plastid. It is found in the chloroplast thylakoid membrane. Component of the cytochrome b6-f complex, which mediates electron transfer between photosystem II (PSII) and photosystem I (PSI), cyclic electron flow around PSI, and state transitions. PetG is required for either the stability or assembly of the cytochrome b6-f complex. This is Cytochrome b6-f complex subunit 5 from Staurastrum punctulatum (Green alga).